Here is a 369-residue protein sequence, read N- to C-terminus: Methionine aminopeptidase 1B, chloroplastic (369 aa).

Residues 1-61 (MASSVFLSSF…YSPRQFHVSA (61 aa)) constitute a chloroplast transit peptide. Histidine 199 contacts substrate. A divalent metal cation-binding residues include aspartate 216, aspartate 227, and histidine 290. Residue histidine 297 participates in substrate binding. Glutamate 322 and glutamate 353 together coordinate a divalent metal cation.

The protein belongs to the peptidase M24A family. Methionine aminopeptidase type 1 subfamily. It depends on Co(2+) as a cofactor. Zn(2+) is required as a cofactor. Mn(2+) serves as cofactor. The cofactor is Fe(2+). Ubiquitous. Preferentially expressed in green tissues.

The protein resides in the plastid. Its subcellular location is the chloroplast. The enzyme catalyses Release of N-terminal amino acids, preferentially methionine, from peptides and arylamides.. In terms of biological role, removes the N-terminal methionine from nascent proteins. The N-terminal methionine is often cleaved when the second residue in the primary sequence is small and uncharged (Met-Ala-, Cys, Gly, Pro, Ser, Thr, or Val). The protein is Methionine aminopeptidase 1B, chloroplastic (MAP1B) of Arabidopsis thaliana (Mouse-ear cress).